The chain runs to 434 residues: Septin-6 (434 aa).

Residue alanine 2 is modified to N-acetylalanine. At serine 27 the chain carries Phosphoserine. The 267-residue stretch at 39 to 305 (QGFCFNILCV…ELYRRCKLEE (267 aa)) folds into the Septin-type G domain. Residues 49 to 56 (GETGLGKS) are G1 motif. Residues 49 to 56 (GETGLGKS), glycine 104, 185 to 193 (KSDAISKSE), glycine 239, and arginine 254 contribute to the GTP site. Residues 101–104 (STVG) are G3 motif. Positions 184-187 (AKSD) are G4 motif. Residues 321-407 (QETYEAKRNE…QRKAAAELLQ (87 aa)) adopt a coiled-coil conformation. Lysine 367 is subject to N6-acetyllysine. The tract at residues 403–434 (AELLQSQGSQAGGSQTLKRDKEKKNNPWLCIE) is disordered. The span at 407-417 (QSQGSQAGGSQ) shows a compositional bias: low complexity. Serine 416 bears the Phosphoserine mark. Phosphothreonine is present on threonine 418.

Belongs to the TRAFAC class TrmE-Era-EngA-EngB-Septin-like GTPase superfamily. Septin GTPase family. Septins polymerize into heterooligomeric protein complexes that form filaments, and associate with cellular membranes, actin filaments and microtubules. GTPase activity is required for filament formation. Filaments are assembled from asymmetrical heterotrimers, composed of SEPTIN2, SEPTIN6 and SEPTIN7 that associate head-to-head to form a hexameric unit. Within the trimer, directly interacts with SEPTIN2 and SEPTIN7. Also interacts with SEPTIN9 and SEPTIN12. Interaction with SEPTIN12 alters filament structure. Component of a septin core octameric complex consisting of SEPTIN12, SEPTIN7, SEPTIN6 and SEPTIN2 or SEPTIN4 in the order 12-7-6-2-2-6-7-12 or 12-7-6-4-4-6-7-12 and located in the sperm annulus. Interacts with SOCS7. Interacts with HNRNPA1. Expressed in the cerebral cortex (at protein level). Associated with synaptic vesicles in various brain regions, including glomeruli of the olfactory bulb (at protein level).

The protein resides in the cytoplasm. It localises to the cytoskeleton. Its subcellular location is the spindle. The protein localises to the chromosome. It is found in the centromere. The protein resides in the kinetochore. It localises to the cleavage furrow. Its subcellular location is the midbody. The protein localises to the cell projection. It is found in the cilium. The protein resides in the flagellum. Filament-forming cytoskeletal GTPase. Required for normal organization of the actin cytoskeleton. Involved in cytokinesis. Forms a filamentous structure with SEPTIN12, SEPTIN6, SEPTIN2 and probably SEPTIN4 at the sperm annulus which is required for the structural integrity and motility of the sperm tail during postmeiotic differentiation. The protein is Septin-6 of Mus musculus (Mouse).